The primary structure comprises 2387 residues: Highly reducing polyketide synthase curS1 (2387 aa).

Positions 10 to 433 (DVPIAVVGLS…GTNGHVVLES (424 aa)) constitute a Ketosynthase family 3 (KS3) domain. Active-site for beta-ketoacyl synthase activity residues include cysteine 182, histidine 316, and histidine 356. Residues 551–891 (FVFTGQGAQW…ELASELFLKG (341 aa)) form a malonyl-CoA:ACP transacylase (MAT) domain region. Catalysis depends on serine 641, which acts as the For malonyltransferase activity. The tract at residues 940 to 1075 (KSIIGAQVPM…GLITIDYAET (136 aa)) is N-terminal hotdog fold. In terms of domain architecture, PKS/mFAS DH spans 940 to 1259 (KSIIGAQVPM…VSELENDSGE (320 aa)). The dehydratase (DH) domain stretch occupies residues 942–1256 (IIGAQVPMMD…DYRVSELEND (315 aa)). The Proton acceptor; for dehydratase activity role is filled by histidine 972. The tract at residues 1103–1259 (SYTYSKEDFY…VSELENDSGE (157 aa)) is C-terminal hotdog fold. Aspartate 1169 acts as the Proton donor; for dehydratase activity in catalysis. Positions 1673–1987 (GLMDTLTFIE…QGKHRGKLVL (315 aa)) are enoylreductase (ER) domain. Residues 2011–2191 (STYLFIGGLG…VAVDLGIMRD (181 aa)) are catalytic ketoreductase (KRc) domain. Residues 2302–2379 (EAVVIITDAL…VFAGKIAEKS (78 aa)) form the Carrier domain. Serine 2339 carries the post-translational modification O-(pantetheine 4'-phosphoryl)serine.

It functions in the pathway mycotoxin biosynthesis. In terms of biological role, highly reducing polyketide synthase; part of the gene cluster that mediates the biosynthesis of 10,11-dehydrocurvularin, a prevalent fungal phytotoxin with heat shock response and immune-modulatory activities. The highly reducing polyketide synthase curS1 is responsible for biosynthesis up to the tetraketide stage. The non-reducing polyketide synthase curS2 then conducts four additional chain extension cycles, producing the unreduced part of the nascent octaketide from C-1 to C-8 in 10,11-dehydrocurvularin. The sequence is that of Highly reducing polyketide synthase curS1 from Aspergillus terreus.